The chain runs to 1415 residues: DNA-directed RNA polymerase subunit beta' (1415 aa).

Cysteine 214, cysteine 294, cysteine 301, and cysteine 304 together coordinate Zn(2+). A compositionally biased stretch (polar residues) spans 1335-1351; sequence QNFVDSQGKPQSQSSFI. Positions 1335 to 1390 are disordered; it reads QNFVDSQGKPQSQSSFIDDSMSEFSPVKDKSGSVLDDSDFPPGNFDSDFPADNYDL.

It belongs to the RNA polymerase beta' chain family. RpoC2 subfamily. In cyanobacteria the RNAP catalytic core is composed of 2 alpha, 1 beta, 1 beta', 1 gamma and 1 omega subunit. When a sigma factor is associated with the core the holoenzyme is formed, which can initiate transcription. Requires Zn(2+) as cofactor.

The enzyme catalyses RNA(n) + a ribonucleoside 5'-triphosphate = RNA(n+1) + diphosphate. Functionally, DNA-dependent RNA polymerase catalyzes the transcription of DNA into RNA using the four ribonucleoside triphosphates as substrates. The sequence is that of DNA-directed RNA polymerase subunit beta' from Trichodesmium erythraeum (strain IMS101).